Here is a 310-residue protein sequence, read N- to C-terminus: Tagatose-6-phosphate kinase (310 aa).

The protein belongs to the carbohydrate kinase PfkB family. LacC subfamily.

The enzyme catalyses D-tagatofuranose 6-phosphate + ATP = D-tagatofuranose 1,6-bisphosphate + ADP + H(+). Its pathway is carbohydrate metabolism; D-tagatose 6-phosphate degradation; D-glyceraldehyde 3-phosphate and glycerone phosphate from D-tagatose 6-phosphate: step 1/2. In Lactococcus lactis subsp. lactis (Streptococcus lactis), this protein is Tagatose-6-phosphate kinase.